Reading from the N-terminus, the 299-residue chain is CCR4-NOT transcription complex subunit 9 (299 aa).

It belongs to the CNOT9 family. In terms of assembly, homodimer. Component of the CCR4-NOT complex.

It localises to the nucleus. The protein localises to the cytoplasm. Its subcellular location is the P-body. Functionally, component of the CCR4-NOT complex which is one of the major cellular mRNA deadenylases and is linked to various cellular processes including bulk mRNA degradation, miRNA-mediated repression, translational repression during translational initiation and general transcription regulation. Additional complex functions may be a consequence of its influence on mRNA expression. Involved in down-regulation of MYB- and JUN-dependent transcription. Enhances ligand-dependent transcriptional activity of nuclear hormone receptors. May play a role in cell differentiation. The chain is CCR4-NOT transcription complex subunit 9 from Xenopus tropicalis (Western clawed frog).